A 190-amino-acid chain; its full sequence is Large ribosomal subunit protein uL6 (190 aa).

This sequence belongs to the universal ribosomal protein uL6 family.

In Spodoptera frugiperda (Fall armyworm), this protein is Large ribosomal subunit protein uL6 (RpL9).